A 533-amino-acid chain; its full sequence is NAD(P)H-quinone oxidoreductase chain 4 (533 aa).

A run of 15 helical transmembrane segments spans residues 5-25, 36-56, 70-90, 91-111, 115-135, 137-157, 169-189, 210-230, 244-264, 278-298, 315-335, 336-356, 377-397, 418-438, and 465-485; these read VPWL…VPLV, WYAL…YLTG, VSWL…LSMP, LILL…PVSF, LFYF…AVQD, LLFF…LAIW, FILY…AMGF, GFQL…LPIV, TAPV…YALL, FAPL…LTSF, MGFV…GAML, QMIS…ATYD, FALW…SGFV, VVIC…LLSM, and VYII…PKLM.

It belongs to the complex I subunit 4 family.

It is found in the cellular thylakoid membrane. The catalysed reaction is a plastoquinone + NADH + (n+1) H(+)(in) = a plastoquinol + NAD(+) + n H(+)(out). It catalyses the reaction a plastoquinone + NADPH + (n+1) H(+)(in) = a plastoquinol + NADP(+) + n H(+)(out). NDH-1 shuttles electrons from NAD(P)H, via FMN and iron-sulfur (Fe-S) centers, to quinones in the respiratory chain. The immediate electron acceptor for the enzyme in this species is believed to be plastoquinone. Couples the redox reaction to proton translocation (for every two electrons transferred, four hydrogen ions are translocated across the cytoplasmic membrane), and thus conserves the redox energy in a proton gradient. This chain is NAD(P)H-quinone oxidoreductase chain 4, found in Synechococcus sp. (strain CC9605).